A 144-amino-acid polypeptide reads, in one-letter code: MKLWLFACLVACFVGAWMPVVHAQGAFEDCCLGYQHRIKWNVLRHARNYHQQEVSGSCNLRAVRFYFRQKVVCGNPEDMNVKRAMRILTARKRLVHWKSASDSQTERKKSNHMKSKVENPNSTSVRSATLGHPRMVMMPRKTNN.

Positions M1–A23 are cleaved as a signal peptide. Intrachain disulfides connect C30/C58 and C31/C73. The interval K98 to N144 is disordered. Residues E118–S127 show a composition bias toward polar residues.

This sequence belongs to the intercrine beta (chemokine CC) family. As to expression, specifically expressed by thymic dendritic cells. High levels in thymus and small intestine.

It localises to the secreted. Functionally, potentially involved in T-cell development. Recombinant protein shows chemotactic activity on thymocytes, macrophages, THP-1 cells, and dendritics cells but is inactive on peripheral blood lymphocytes and neutrophils. Binds to CCR9. Binds to atypical chemokine receptor ACKR4 and mediates the recruitment of beta-arrestin (ARRB1/2) to ACKR4. This Mus musculus (Mouse) protein is C-C motif chemokine 25 (Ccl25).